Here is a 1165-residue protein sequence, read N- to C-terminus: Error-prone DNA polymerase (1165 aa).

Residues 1111 to 1165 (SEGLARPPLPTGADLYEPLTYEPLNGDRRDNPDAPAQRLRHPRDVRILPPSRDFH) form a disordered region. Residues 1152–1165 (PRDVRILPPSRDFH) are compositionally biased toward basic and acidic residues.

It belongs to the DNA polymerase type-C family. DnaE2 subfamily.

It is found in the cytoplasm. It carries out the reaction DNA(n) + a 2'-deoxyribonucleoside 5'-triphosphate = DNA(n+1) + diphosphate. In terms of biological role, DNA polymerase involved in damage-induced mutagenesis and translesion synthesis (TLS). It is not the major replicative DNA polymerase. In Rhodopseudomonas palustris (strain HaA2), this protein is Error-prone DNA polymerase.